Here is a 1477-residue protein sequence, read N- to C-terminus: Ring canal kelch protein (1477 aa).

Disordered regions lie at residues 19–62, 76–96, and 108–137; these read LSNG…PGLG, LLQQ…EGSG, and SQNS…YSNE. A compositionally biased stretch (low complexity) spans 20–46; sequence SNGNSNNNNQQQQQQQQGQNPQQPAQN. Phosphoserine occurs at positions 108 and 111. Residues 157-223 form the BTB domain; that stretch reads CDVILVADDV…VYTATVEVNE (67 aa). Kelch repeat units follow at residues 404-449, 450-496, 498-543, 545-592, 594-639, and 641-687; these read ILLV…VLGD, KVYA…VLNG, IYAV…VVHG, LYAV…VLNN, LYAV…AHDG, and LYVV…MIDK. Position 690 (U690) is a non-standard amino acid, selenocysteine. 5 disordered regions span residues 744–841, 1119–1200, 1291–1326, 1359–1416, and 1446–1477; these read PAAP…PQRI, HSAA…GNGT, RDAN…QYED, PLLQ…FKPK, and PVSL…EHND. 2 stretches are compositionally biased toward low complexity: residues 763 to 813 and 820 to 839; these read APIG…ANNN and AAPA…QQPQ. Over residues 1125-1137 the composition is skewed to polar residues; sequence IPSSSNINANRTT. The span at 1166 to 1192 shows a compositional bias: low complexity; sequence KTTSTGSGKSVTLAKKTSTAAARSSSS. Low complexity-rich tracts occupy residues 1374-1391 and 1456-1477; these read QQRR…QSQQ and TTSS…EHND.

In terms of tissue distribution, both proteins are expressed in ovaries, male testis, ovariectomized females, cuticle, salivary gland and imaginal disks. Kelch short protein is the predominant form and is also expressed in fat bodies. On entry into metamorphosis levels of full-length protein increase in testis and imaginal disks.

The protein localises to the cytoplasm. It is found in the cytoskeleton. Component of ring canals that regulates the flow of cytoplasm between cells. May be involved in the regulation of cytoplasm flow from nurse cells to the oocyte during oogenesis. Binds actin. In Drosophila melanogaster (Fruit fly), this protein is Ring canal kelch protein (kel).